A 174-amino-acid polypeptide reads, in one-letter code: MKILITGRPGVGKTTLIKKLSRLLQNAGGFYTEEMREDGKRIGFKIITLDGEEGILARTDLPSPYRVGKYYVNLKDLEEIGVRSLERAFQEKDLIIIDEIGKMELLSRKFREVVEKIFDSEKDVVATIKKSSDPFVEKIKNRNDVVIFELNEKNRNSLLNEILSVLKFNRGEKQ.

ATP contacts are provided by residues 7–14 and 94–101; these read GRPGVGKT and LIIIDEIG.

The protein belongs to the THEP1 NTPase family.

It carries out the reaction a ribonucleoside 5'-triphosphate + H2O = a ribonucleoside 5'-diphosphate + phosphate + H(+). Has nucleotide phosphatase activity towards ATP, GTP, CTP, TTP and UTP. May hydrolyze nucleoside diphosphates with lower efficiency. The sequence is that of Nucleoside-triphosphatase THEP1 from Thermotoga sp. (strain RQ2).